Here is a 400-residue protein sequence, read N- to C-terminus: Large envelope protein (400 aa).

At Met-1 the chain carries N-acetylmethionine. Disordered stretches follow at residues 1-24 (MGGWSSKPRKGMGTNLSVPNPLGF) and 86-114 (TTVPAAPPPASTNRQSGRQPTPFSPPLRD). Gly-2 carries the N-myristoyl glycine; by host lipid modification. The interval 2–119 (GGWSSKPRKG…PPLRDTHPQA (118 aa)) is pre-S1. The tract at residues 2–174 (GGWSSKPRKG…SSKTGDPVPN (173 aa)) is pre-S. Residues 2 to 181 (GGWSSKPRKG…VPNMENIASG (180 aa)) lie on the Virion surface; in external conformation side of the membrane. Residues 2-253 (GGWSSKPRKG…PGYRWMCLRR (252 aa)) are Intravirion; in internal conformation-facing. N-linked (GlcNAc...) asparagine glycosylation is present at Trp-4. Residues 96–106 (STNRQSGRQPT) are compositionally biased toward polar residues. Residues 120 to 174 (MQWNSTTFLQTLQDSRVRALYLPAGGSSSGTVSPAQNTVSAISSISSKTGDPVPN) form a pre-S2 region. The chain crosses the membrane as a helical span at residues 182–202 (LLGHLLVLQAGFFSLTKILTI). Topologically, residues 203–253 (PQSLDSWWTSLNFLGGTPACPGQNSQSQISSHSPTCCPPICPGYRWMCLRR) are intravirion; in external conformation. A helical membrane pass occupies residues 254–274 (FIIFLCILLLCLIFLLVLLDY). Residues 275–348 (QGMLPVCPLT…WASVRFSWLS (74 aa)) lie on the Virion surface side of the membrane. N-linked (GlcNAc...) asparagine; by host glycosylation is present at Asn-320. Residues 349–369 (LLVPFVQWFVGLSPTVWLSVI) form a helical membrane-spanning segment. Topologically, residues 370 to 375 (WMMWFW) are intravirion. The chain crosses the membrane as a helical span at residues 376–398 (GPSLYNILRPFMPLLPTFFCLWV). Over 399–400 (YI) the chain is Virion surface.

Belongs to the orthohepadnavirus major surface antigen family. In terms of assembly, interacts (via its myristoylated pre-S1 region) with the host SLC10A1/NTCP; this interaction is essential for viral entry. As to quaternary structure, in its internal form (Li-HBsAg), interacts with the capsid protein and with the isoform S. Interacts with host chaperone CANX. Associates with host chaperone CANX through its pre-S2 N glycan; this association may be essential for isoform M proper secretion. In terms of assembly, interacts with isoform L. Interacts with the antigens of satellite virus HDV (HDVAgs); this interaction is required for encapsidation of HDV genomic RNA. In terms of processing, isoform M is N-terminally acetylated by host at a ratio of 90%, and N-glycosylated by host at the pre-S2 region. Myristoylated; this modification is essential for its interaction with the host protein SLC10A1/NTCP.

Its subcellular location is the virion membrane. Its function is as follows. The large envelope protein exists in two topological conformations, one which is termed 'external' or Le-HBsAg and the other 'internal' or Li-HBsAg. In its external conformation the protein attaches the virus to cell receptors and thereby initiating infection. This interaction determines the species specificity and liver tropism. This attachment induces virion internalization predominantly through caveolin-mediated endocytosis. The large envelope protein also assures fusion between virion membrane and endosomal membrane. In its internal conformation the protein plays a role in virion morphogenesis and mediates the contact with the nucleocapsid like a matrix protein. Functionally, the middle envelope protein plays an important role in the budding of the virion. It is involved in the induction of budding in a nucleocapsid independent way. In this process the majority of envelope proteins bud to form subviral lipoprotein particles of 22 nm of diameter that do not contain a nucleocapsid. The sequence is that of Large envelope protein from Hepatitis B virus genotype B2 subtype adw (isolate China/patient4/1996) (HBV-B).